A 106-amino-acid polypeptide reads, in one-letter code: Urease subunit beta (106 aa).

It belongs to the urease beta subunit family. In terms of assembly, heterotrimer of UreA (gamma), UreB (beta) and UreC (alpha) subunits. Three heterotrimers associate to form the active enzyme.

It is found in the cytoplasm. The catalysed reaction is urea + 2 H2O + H(+) = hydrogencarbonate + 2 NH4(+). It functions in the pathway nitrogen metabolism; urea degradation; CO(2) and NH(3) from urea (urease route): step 1/1. The chain is Urease subunit beta from Prochlorococcus marinus (strain AS9601).